Consider the following 193-residue polypeptide: MEKKQSILSPIIRITFTFLVLCGLVYPLIVTGIAQAVMKDNADGSLIYNDKNEVIGSKLIGQNFTDPRYFQGRVSSIEYKAEASGSNNYAPSNPDLEKRVEKSIEEWKKQNPSVPVTEVPIDLVTNSGSGLDPDISPKAASVQVDRISKLTDIPKEKLNQLIKDQTEGAALGLFGETRVNVLKLNLALQELMK.

A helical membrane pass occupies residues 14–34 (ITFTFLVLCGLVYPLIVTGIA).

It belongs to the KdpC family. The system is composed of three essential subunits: KdpA, KdpB and KdpC.

It is found in the cell membrane. Functionally, part of the high-affinity ATP-driven potassium transport (or Kdp) system, which catalyzes the hydrolysis of ATP coupled with the electrogenic transport of potassium into the cytoplasm. This subunit acts as a catalytic chaperone that increases the ATP-binding affinity of the ATP-hydrolyzing subunit KdpB by the formation of a transient KdpB/KdpC/ATP ternary complex. The polypeptide is Potassium-transporting ATPase KdpC subunit (Bacillus cereus (strain ATCC 14579 / DSM 31 / CCUG 7414 / JCM 2152 / NBRC 15305 / NCIMB 9373 / NCTC 2599 / NRRL B-3711)).